Here is a 587-residue protein sequence, read N- to C-terminus: 5-aminolevulinate synthase, erythroid-specific, mitochondrial (587 aa).

The N-terminal 49 residues, 1–49, are a transit peptide targeting the mitochondrion; it reads MVTAAMLLQRCPVLIRSPTGLLGKMIKTHQFLFGIGRCPILATQGPSFS. Residue R163 coordinates succinyl-CoA. Positions 258 and 259 each coordinate pyridoxal 5'-phosphate. Succinyl-CoA contacts are provided by S280 and K299. 3 residues coordinate pyridoxal 5'-phosphate: S332, H360, and T388. The active site involves K391. K391 is modified (N6-(pyridoxal phosphate)lysine). Pyridoxal 5'-phosphate is bound by residues T420 and T421. Residue T508 coordinates succinyl-CoA.

It belongs to the class-II pyridoxal-phosphate-dependent aminotransferase family. As to quaternary structure, homodimer. Interacts with SUCLA2. It depends on pyridoxal 5'-phosphate as a cofactor.

The protein resides in the mitochondrion inner membrane. It carries out the reaction succinyl-CoA + glycine + H(+) = 5-aminolevulinate + CO2 + CoA. It participates in porphyrin-containing compound metabolism; protoporphyrin-IX biosynthesis; 5-aminolevulinate from glycine: step 1/1. Functionally, catalyzes the pyridoxal 5'-phosphate (PLP)-dependent condensation of succinyl-CoA and glycine to form aminolevulinic acid (ALA), with CoA and CO2 as by-products. Contributes significantly to heme formation during erythropoiesis. This is 5-aminolevulinate synthase, erythroid-specific, mitochondrial (ALAS2) from Bos taurus (Bovine).